A 302-amino-acid polypeptide reads, in one-letter code: Glutaminase (302 aa).

Residues S61, N111, E155, N162, Y186, Y238, and V256 each coordinate substrate.

This sequence belongs to the glutaminase family. Homotetramer.

The enzyme catalyses L-glutamine + H2O = L-glutamate + NH4(+). The protein is Glutaminase of Stutzerimonas stutzeri (strain A1501) (Pseudomonas stutzeri).